The sequence spans 278 residues: MTEAFARAKINLTLHVTGQRPDGYHLLDSLVVFADVGDRVRAEPAEALSLAITGPQAANLPVADDNLVLRAARTLGGQGARLTLEKHLPVASGIGGGSADAAAALVALARLWQVPLPDPAAVLKLGADVPVCLEGRAVRMAGVGEILTPLAAPLPEAWLVLANPGVSVPTPPVFKALARRDNPPMPDDLPGWPTVESLAAFLATQRNDLEPPAIALAPEIARTRAALAAQPGCLLARMSGSGATCFGLFAAEEAARAAAEAIGAEHPGWWVAPARMVG.

The active site involves Lys-9. 89-99 (PVASGIGGGSA) is an ATP binding site. Asp-128 is a catalytic residue.

It belongs to the GHMP kinase family. IspE subfamily.

The catalysed reaction is 4-CDP-2-C-methyl-D-erythritol + ATP = 4-CDP-2-C-methyl-D-erythritol 2-phosphate + ADP + H(+). The protein operates within isoprenoid biosynthesis; isopentenyl diphosphate biosynthesis via DXP pathway; isopentenyl diphosphate from 1-deoxy-D-xylulose 5-phosphate: step 3/6. Catalyzes the phosphorylation of the position 2 hydroxy group of 4-diphosphocytidyl-2C-methyl-D-erythritol. In Cereibacter sphaeroides (strain ATCC 17029 / ATH 2.4.9) (Rhodobacter sphaeroides), this protein is 4-diphosphocytidyl-2-C-methyl-D-erythritol kinase.